Reading from the N-terminus, the 119-residue chain is Class I hydrophobin 2 (119 aa).

An N-terminal signal peptide occupies residues 1–22; the sequence is MFARISTIITTLFFAMLAAATA. 4 disulfide bridges follow: Cys36-Cys97, Cys45-Cys91, Cys46-Cys79, and Cys98-Cys112.

The protein belongs to the fungal hydrophobin family. Self-assembles to form functional amyloid fibrils called rodlets. Self-assembly into fibrillar rodlets occurs spontaneously at hydrophobic:hydrophilic interfaces and the rodlets further associate laterally to form amphipathic monolayers.

The protein localises to the secreted. The protein resides in the cell wall. Aerial growth, conidiation, and dispersal of filamentous fungi in the environment rely upon a capability of their secreting small amphipathic proteins called hydrophobins (HPBs) with low sequence identity. Class I can self-assemble into an outermost layer of rodlet bundles on aerial cell surfaces, conferring cellular hydrophobicity that supports fungal growth, development and dispersal; whereas Class II form highly ordered films at water-air interfaces through intermolecular interactions but contribute nothing to the rodlet structure. Abh2 is a class I hydrophobin involved in the emergence of aerial hyphae and strands. The polypeptide is Class I hydrophobin 2 (Agaricus bisporus (White button mushroom)).